A 556-amino-acid chain; its full sequence is PPE family protein PPE2 (556 aa).

Residues 8–164 (ASPPEVHSAL…ASYQAVSTAA (157 aa)) are PPE. Positions 201-256 (QKIGYTDFYNNVIQPFINWLTNLPFLQAMFSGFDPWLPSLGNPLTFLSPANIAFAL) are SH3-like. Positions 319-340 (LEQTLALLPAALPLLAAPLAPL) are leucine zipper motif. Disordered regions lie at residues 385–418 (TPTPAPAPAPTAVTAPTPPPGPPPPPVTAPPPVT) and 443–556 (GTGV…TRVE). The span at 400–417 (PTPPPGPPPPPVTAPPPV) shows a compositional bias: pro residues. Residues 456–471 (AEAPAAAAAPEEQVQP) are compositionally biased toward low complexity. Residues 472-481 (QRRRRPKIKQ) show a composition bias toward basic residues. The short motif at 473–481 (RRRRPKIKQ) is the Nuclear localization signal element.

The protein belongs to the mycobacterial PPE family.

The protein resides in the secreted. It is found in the host cytoplasm. Its subcellular location is the host nucleus. In terms of biological role, inhibits nitric oxide (NO) production in activated macrophages. Acts by inhibiting expression of the host inducible nitric oxide synthase (iNOS). PPE2 is translocated into the host macrophage nucleus, where it interacts with a GATA-binding site overlapping with the TATA box of NOS2 (iNOS) promoter, and strongly inhibits NOS2 gene transcription. Reduction in NO production in turn facilitates intracellular survival of the bacilli inside the macrophage. In addition, disrupts the assembly of NADPH oxidase complex, which inhibits NADPH oxidase-mediated reactive oxygen species (ROS) generation in macrophages and favors M.tuberculosis survival. Acts by interacting with NCF2, the cytosolic subunit of NADPH oxidase, and preventing translocation of NCF2 and NCF1 to the membrane, which causes a reduction of the functional assembly of NADPH oxidase complex and a decrease in NADPH oxidase activity. The sequence is that of PPE family protein PPE2 (PPE2) from Mycobacterium tuberculosis (strain ATCC 25618 / H37Rv).